A 310-amino-acid chain; its full sequence is Probable endonuclease 4 (310 aa).

Residues 1–31 are disordered; that stretch reads MNNQQSRGALGTSGATPDLPDATPGLSRNPV. Residues histidine 94, histidine 134, glutamate 173, aspartate 207, histidine 210, histidine 244, aspartate 257, histidine 259, and glutamate 289 each coordinate Zn(2+).

This sequence belongs to the AP endonuclease 2 family. The cofactor is Zn(2+).

The enzyme catalyses Endonucleolytic cleavage to 5'-phosphooligonucleotide end-products.. Its function is as follows. Endonuclease IV plays a role in DNA repair. It cleaves phosphodiester bonds at apurinic or apyrimidinic (AP) sites, generating a 3'-hydroxyl group and a 5'-terminal sugar phosphate. The sequence is that of Probable endonuclease 4 from Streptomyces avermitilis (strain ATCC 31267 / DSM 46492 / JCM 5070 / NBRC 14893 / NCIMB 12804 / NRRL 8165 / MA-4680).